Consider the following 538-residue polypeptide: Chaperonin GroEL (538 aa).

ATP contacts are provided by residues 29-32 (TLGP), 86-90 (DGTTT), G413, 479-481 (DAL), and D495.

Belongs to the chaperonin (HSP60) family. In terms of assembly, forms a cylinder of 14 subunits composed of two heptameric rings stacked back-to-back. Interacts with the co-chaperonin GroES.

It localises to the cytoplasm. The catalysed reaction is ATP + H2O + a folded polypeptide = ADP + phosphate + an unfolded polypeptide.. Functionally, together with its co-chaperonin GroES, plays an essential role in assisting protein folding. The GroEL-GroES system forms a nano-cage that allows encapsulation of the non-native substrate proteins and provides a physical environment optimized to promote and accelerate protein folding. The protein is Chaperonin GroEL of Thermotoga maritima (strain ATCC 43589 / DSM 3109 / JCM 10099 / NBRC 100826 / MSB8).